Reading from the N-terminus, the 336-residue chain is Fructose-1,6-bisphosphatase class 1 (336 aa).

Mg(2+) is bound by residues Glu92, Asp115, Leu117, and Asp118. Substrate-binding positions include 118 to 121, Asn211, Tyr244, 262 to 264, and Lys274; these read DGSS and YLY. Glu280 is a binding site for Mg(2+).

The protein belongs to the FBPase class 1 family. In terms of assembly, homotetramer. Requires Mg(2+) as cofactor.

It is found in the cytoplasm. The catalysed reaction is beta-D-fructose 1,6-bisphosphate + H2O = beta-D-fructose 6-phosphate + phosphate. It functions in the pathway carbohydrate biosynthesis; gluconeogenesis. This Vibrio atlanticus (strain LGP32) (Vibrio splendidus (strain Mel32)) protein is Fructose-1,6-bisphosphatase class 1.